A 294-amino-acid chain; its full sequence is UPF0761 membrane protein YPN_0254 (294 aa).

Transmembrane regions (helical) follow at residues 44-64 (LLSL…FPMF), 67-87 (ISIK…GDII), 108-128 (GLIV…NIIW), 136-156 (LVFS…LVGA), 185-205 (VFPL…VPTV), 212-232 (ALIG…GFAM), and 246-266 (VLAV…IVLL).

Belongs to the UPF0761 family.

It is found in the cell inner membrane. The polypeptide is UPF0761 membrane protein YPN_0254 (Yersinia pestis bv. Antiqua (strain Nepal516)).